A 392-amino-acid polypeptide reads, in one-letter code: Lipase (392 aa).

The N-terminal stretch at 1–26 (MVSFISISQGVSLCLLVSSMMLGSSA) is a signal peptide. Residues 27–95 (VPVSGKSGSS…GGNLTSIGKR (69 aa)) constitute a propeptide that is removed on maturation. The segment at 50 to 69 (PLISSRCAPPSNKGSKSDLQ) is disordered. Cystine bridges form between cysteine 152–cysteine 391, cysteine 163–cysteine 166, and cysteine 358–cysteine 367. Serine 268 functions as the Nucleophile in the catalytic mechanism. Aspartate 327 functions as the Charge relay system in the catalytic mechanism. Residue aspartate 379 coordinates Ca(2+). Catalysis depends on histidine 380, which acts as the Charge relay system.

This sequence belongs to the AB hydrolase superfamily. Lipase family.

Its subcellular location is the secreted. It localises to the extracellular space. It carries out the reaction a triacylglycerol + H2O = a diacylglycerol + a fatty acid + H(+). Its activity is regulated as follows. Lipase activity is maximal at a lipid-water interface (interfacial activation), probably by an induced conformational change that results in an increased accessibility of the active site to the substrate. In terms of biological role, hydrolyzes ester bonds of triglycerides as well as of their derived partial glycerides with a strong 1,3-positional specificity. In Rhizopus niveus, this protein is Lipase.